We begin with the raw amino-acid sequence, 350 residues long: UDP-N-acetylenolpyruvoylglucosamine reductase (350 aa).

The FAD-binding PCMH-type domain occupies 24 to 195; sequence HVDATARWLL…VAVEFNLPLL (172 aa). The active site involves R172. Residue S245 is the Proton donor of the active site. The active site involves E342.

This sequence belongs to the MurB family. FAD is required as a cofactor.

The protein resides in the cytoplasm. The enzyme catalyses UDP-N-acetyl-alpha-D-muramate + NADP(+) = UDP-N-acetyl-3-O-(1-carboxyvinyl)-alpha-D-glucosamine + NADPH + H(+). The protein operates within cell wall biogenesis; peptidoglycan biosynthesis. Its function is as follows. Cell wall formation. This is UDP-N-acetylenolpyruvoylglucosamine reductase from Xanthomonas campestris pv. campestris (strain B100).